The sequence spans 653 residues: TRAF3-interacting protein 1 (653 aa).

The tract at residues 1–306 (MNAAVVRRTQ…ADKSEKKADI (306 aa)) is abolishes microtubules binding when missing. Residues 134–467 (GDSRGRVLRT…DSQNSDNEDD (334 aa)) are disordered. Basic and acidic residues-rich tracts occupy residues 145–305 (KAQE…KKAD), 325–335 (NSLEGRKEDNI), and 370–384 (ENAE…KGDS). Residues 229-653 (RAKQDRDRNN…VHSINLSSRR (425 aa)) form a DISC1-interaction domain region. The residue at position 437 (Ser437) is a Phosphoserine. Positions 448 to 462 (SGKTVSTVIIDSQNS) are enriched in polar residues. A coiled-coil region spans residues 533–628 (AWKKEKDIVS…IKDQQDKICA (96 aa)).

It belongs to the TRAF3IP1 family. In terms of assembly, component of the IFT complex B, at least composed of IFT20, IFT22, IFT25, IFT27, IFT46, IFT52, TRAF3IP1/IFT54, IFT57, IFT74, IFT80, IFT81, and IFT88. Interacts with IFT88. Interacts with IL13RA1. Binds to microtubules, TRAF3 and DISC1. Interacts with MAP4.

It is found in the cytoplasm. It localises to the cytoskeleton. Its subcellular location is the cell projection. The protein resides in the cilium. The protein localises to the cilium axoneme. It is found in the cilium basal body. Plays an inhibitory role on IL13 signaling by binding to IL13RA1. Involved in suppression of IL13-induced STAT6 phosphorylation, transcriptional activity and DNA-binding. Recruits TRAF3 and DISC1 to the microtubules. Involved in kidney development and epithelial morphogenesis. Involved in the regulation of microtubule cytoskeleton organization. Is a negative regulator of microtubule stability, acting through the control of MAP4 levels. Involved in ciliogenesis. This Rattus norvegicus (Rat) protein is TRAF3-interacting protein 1 (Traf3ip1).